We begin with the raw amino-acid sequence, 332 residues long: Fructose-1,6-bisphosphatase class 1 (332 aa).

The Mg(2+) site is built by Glu-94, Asp-116, Leu-118, and Asp-119. Residues 119-122, Asn-211, Tyr-239, 257-259, and Lys-269 contribute to the substrate site; these read DGSS and YLY. Glu-275 provides a ligand contact to Mg(2+).

It belongs to the FBPase class 1 family. As to quaternary structure, homotetramer. Mg(2+) is required as a cofactor.

The protein resides in the cytoplasm. The enzyme catalyses beta-D-fructose 1,6-bisphosphate + H2O = beta-D-fructose 6-phosphate + phosphate. Its pathway is carbohydrate biosynthesis; Calvin cycle. The sequence is that of Fructose-1,6-bisphosphatase class 1 from Synechococcus sp. (strain JA-2-3B'a(2-13)) (Cyanobacteria bacterium Yellowstone B-Prime).